We begin with the raw amino-acid sequence, 181 residues long: Large ribosomal subunit protein uL6 (181 aa).

The protein belongs to the universal ribosomal protein uL6 family. Part of the 50S ribosomal subunit.

Its function is as follows. This protein binds to the 23S rRNA, and is important in its secondary structure. It is located near the subunit interface in the base of the L7/L12 stalk, and near the tRNA binding site of the peptidyltransferase center. This chain is Large ribosomal subunit protein uL6, found in Phytoplasma mali (strain AT).